A 412-amino-acid chain; its full sequence is Serine hydroxymethyltransferase (412 aa).

(6S)-5,6,7,8-tetrahydrofolate is bound by residues L125 and 129–131 (GHL). At K234 the chain carries N6-(pyridoxal phosphate)lysine. E250 provides a ligand contact to (6S)-5,6,7,8-tetrahydrofolate.

Belongs to the SHMT family. As to quaternary structure, homodimer. Requires pyridoxal 5'-phosphate as cofactor.

Its subcellular location is the cytoplasm. The catalysed reaction is (6R)-5,10-methylene-5,6,7,8-tetrahydrofolate + glycine + H2O = (6S)-5,6,7,8-tetrahydrofolate + L-serine. The protein operates within one-carbon metabolism; tetrahydrofolate interconversion. It participates in amino-acid biosynthesis; glycine biosynthesis; glycine from L-serine: step 1/1. Catalyzes the reversible interconversion of serine and glycine with tetrahydrofolate (THF) serving as the one-carbon carrier. This reaction serves as the major source of one-carbon groups required for the biosynthesis of purines, thymidylate, methionine, and other important biomolecules. Also exhibits THF-independent aldolase activity toward beta-hydroxyamino acids, producing glycine and aldehydes, via a retro-aldol mechanism. The chain is Serine hydroxymethyltransferase from Deinococcus geothermalis (strain DSM 11300 / CIP 105573 / AG-3a).